The primary structure comprises 211 residues: Uracil phosphoribosyltransferase (211 aa).

5-phospho-alpha-D-ribose 1-diphosphate contacts are provided by residues arginine 78, arginine 103, and 130–138 (DPMLATGGT). Residues isoleucine 196 and 201 to 203 (GDA) contribute to the uracil site. 5-phospho-alpha-D-ribose 1-diphosphate is bound at residue aspartate 202.

It belongs to the UPRTase family. The cofactor is Mg(2+).

It carries out the reaction UMP + diphosphate = 5-phospho-alpha-D-ribose 1-diphosphate + uracil. It participates in pyrimidine metabolism; UMP biosynthesis via salvage pathway; UMP from uracil: step 1/1. Allosterically activated by GTP. Catalyzes the conversion of uracil and 5-phospho-alpha-D-ribose 1-diphosphate (PRPP) to UMP and diphosphate. This Kineococcus radiotolerans (strain ATCC BAA-149 / DSM 14245 / SRS30216) protein is Uracil phosphoribosyltransferase.